The primary structure comprises 153 residues: Large ribosomal subunit protein uL13 (153 aa).

This sequence belongs to the universal ribosomal protein uL13 family. In terms of assembly, part of the 50S ribosomal subunit.

Its function is as follows. This protein is one of the early assembly proteins of the 50S ribosomal subunit, although it is not seen to bind rRNA by itself. It is important during the early stages of 50S assembly. The chain is Large ribosomal subunit protein uL13 from Methylobacterium sp. (strain 4-46).